A 440-amino-acid chain; its full sequence is Xaa-Pro dipeptidase (440 aa).

The Mn(2+) site is built by D244, D255, H336, E381, and E420.

It belongs to the peptidase M24B family. Bacterial-type prolidase subfamily. The cofactor is Mn(2+).

The catalysed reaction is Xaa-L-Pro dipeptide + H2O = an L-alpha-amino acid + L-proline. Splits dipeptides with a prolyl residue in the C-terminal position. This Pseudoalteromonas translucida (strain TAC 125) protein is Xaa-Pro dipeptidase.